A 232-amino-acid polypeptide reads, in one-letter code: uncharacterized protein (232 aa).

A compositionally biased stretch (basic and acidic residues) spans 86–95 (RGLPRPEFKA). The interval 86–107 (RGLPRPEFKANGHPSMDAEADD) is disordered.

This is an uncharacterized protein from Sinorhizobium fredii (strain NBRC 101917 / NGR234).